We begin with the raw amino-acid sequence, 904 residues long: Trichohyalin-like protein 1 (904 aa).

Positions 48–83 (CVLHAVEKNSNLLNIDSNGIISFDEFVLAIFNLLNL) constitute an EF-hand domain. Disordered regions lie at residues 102–792 (PEKE…CSVE) and 858–890 (PYTR…HPQR). Polar residues predominate over residues 113–128 (QATTGDGQWTVGTSPT). 5 stretches are compositionally biased toward basic and acidic residues: residues 172-185 (ASEH…HLEG), 222-240 (TERK…EPAR), 268-300 (ATQR…DEPS), 349-371 (NLGE…ETKD), and 385-398 (SDMR…RGPE). Residues 443–452 (ETQYLSSEGG) are compositionally biased toward polar residues. Residues 524 to 536 (VEEEDGYQGEDPE) are compositionally biased toward acidic residues. Positions 538-554 (PFTQSDEGSSETPNSLA) are enriched in polar residues. Residues 555-578 (SEEGNSSSETGELPVQGDSQSQGD) are compositionally biased toward low complexity. Positions 586–598 (GGHNNNPDTQRQG) are enriched in polar residues. A compositionally biased stretch (basic and acidic residues) spans 759 to 770 (GDQKSPAKKEHN). The span at 771–780 (SSVPWSSLEK) shows a compositional bias: polar residues. Residues 881–890 (LEDKQGHPQR) show a composition bias toward basic and acidic residues.

The protein belongs to the S-100 family.

The sequence is that of Trichohyalin-like protein 1 (TCHHL1) from Homo sapiens (Human).